The chain runs to 124 residues: Small ribosomal subunit protein uS12 (124 aa).

At D89 the chain carries 3-methylthioaspartic acid.

Belongs to the universal ribosomal protein uS12 family. In terms of assembly, part of the 30S ribosomal subunit. Contacts proteins S8 and S17. May interact with IF1 in the 30S initiation complex.

Functionally, with S4 and S5 plays an important role in translational accuracy. Its function is as follows. Interacts with and stabilizes bases of the 16S rRNA that are involved in tRNA selection in the A site and with the mRNA backbone. Located at the interface of the 30S and 50S subunits, it traverses the body of the 30S subunit contacting proteins on the other side and probably holding the rRNA structure together. The combined cluster of proteins S8, S12 and S17 appears to hold together the shoulder and platform of the 30S subunit. This chain is Small ribosomal subunit protein uS12, found in Leptospira biflexa serovar Patoc (strain Patoc 1 / Ames).